The chain runs to 404 residues: SL1278 acyltransferase Chp1 (404 aa).

Residues 1-42 are Periplasmic-facing; it reads MKCPGVSDCVATVRHDNVFAIAAGLRWSAAVPPLHKGDAVTK. The helical transmembrane segment at 43–63 threads the bilayer; that stretch reads LLVGAIAGGMLACAAILGDGI. Topologically, residues 64 to 404 are cytoplasmic; that stretch reads ASADTALIVP…RGLLPKGKKH (341 aa). One can recognise a PE-PPE domain in the interval 104–325; that stretch reads PTATRHVVSY…LRPIIDRAYQ (222 aa).

Belongs to the mycobacterial PPE family.

It localises to the cell inner membrane. It catalyses the reaction 3 3'-(hydroxy)phthioceranyl-2'-palmitoyl(stearoyl)-2-O-sulfo-alpha,alpha-trehalose = 3,6,6'-tris-(hydroxy)phthioceranyl-2-palmitoyl(stearoyl)-2'-sulfo-alpha-alpha-trehalose + 2 2'-palmitoyl/stearoyl-2-O-sulfo-alpha,alpha-trehalose.. With respect to regulation, activity is potentiated by the SL-1 transporter MmpL8. Inhibited by the lipase inhibitor tetrahydrolipstatin (THL). Involved in the final steps of the cell wall sulfolipid-1 (SL-1) biosynthesis. Catalyzes two successive acylations of the precursor 2-palmitoyl-3-(C43)-phthioceranyl-alpha, alpha'-D-trehalose-2'-sulfate (SL1278) to yield the tetraacylated sulfolipid SL-1. This is SL1278 acyltransferase Chp1 from Mycobacterium tuberculosis (strain ATCC 25618 / H37Rv).